Here is a 320-residue protein sequence, read N- to C-terminus: Cell-cell adhesion glycoprotein 64 (320 aa).

The first 19 residues, 1 to 19, serve as a signal peptide directing secretion; sequence MNKFITLFVLLASVSVAMS. Intrachain disulfides connect Cys39–Cys57, Cys67–Cys79, Cys73–Cys86, Cys98–Cys110, Cys104–Cys115, Cys123–Cys138, Cys132–Cys147, Cys157–Cys171, and Cys165–Cys176. A glycan (N-linked (GlcNAc...) asparagine) is linked at Asn49. Asn80 carries N-linked (GlcNAc...) asparagine glycosylation. N-linked (GlcNAc...) asparagine glycans are attached at residues Asn141 and Asn158. Residue Asn187 is glycosylated (N-linked (GlcNAc...) asparagine). Disulfide bonds link Cys188/Cys202 and Cys194/Cys207. N-linked (GlcNAc...) asparagine glycosylation is present at Asn216. Intrachain disulfides connect Cys226/Cys246, Cys232/Cys234, Cys266/Cys285, and Cys270/Cys281. Residue Ser298 is the site of GPI-like-anchor amidated serine attachment. Residues 299-320 constitute a propeptide, removed in mature form; it reads SATTIAFNAFVVFAIVLSVLLF.

Contains 18 disulfide bonds. Post-translationally, the GPI-like-anchor contains a phosphoceramide group, rather than a phosphatidyl group.

Its subcellular location is the cell membrane. Functionally, cell-cell adhesion during development. The chain is Cell-cell adhesion glycoprotein 64 from Heterostelium pallidum (Cellular slime mold).